Reading from the N-terminus, the 63-residue chain is Adipokinetic prohormone type 1 (63 aa).

An N-terminal signal peptide occupies residues 1–22; it reads MVQRCLVVALLVVVVAAALCSA. At Gln23 the chain carries Pyrrolidone carboxylic acid. Thr32 carries the threonine amide modification.

Belongs to the AKH/HRTH/RPCH family. Adipokinetic hormone precursor-related peptide (APRP) can form three type of disulfide-bond dimers: p1 (alpha-alpha), p2 (alpha-beta), and p3 (beta-beta).

The protein localises to the secreted. Functionally, this hormone, released from cells in the corpora cardiaca, causes release of diglycerides from the fat body and stimulation of muscles to use these diglycerides as an energy source during energy-demanding processes. This chain is Adipokinetic prohormone type 1, found in Schistocerca nitens (Vagrant locust).